Consider the following 133-residue polypeptide: Holo-[acyl-carrier-protein] synthase (133 aa).

Positions 8 and 57 each coordinate Mg(2+).

It belongs to the P-Pant transferase superfamily. AcpS family. Mg(2+) serves as cofactor.

Its subcellular location is the cytoplasm. The enzyme catalyses apo-[ACP] + CoA = holo-[ACP] + adenosine 3',5'-bisphosphate + H(+). Functionally, transfers the 4'-phosphopantetheine moiety from coenzyme A to a Ser of acyl-carrier-protein. The chain is Holo-[acyl-carrier-protein] synthase from Bartonella quintana (strain Toulouse) (Rochalimaea quintana).